The chain runs to 99 residues: RNA-binding protein Hfq (99 aa).

The Sm domain maps to 10–71; sequence DLFLNQLRKE…ISSILPSKPI (62 aa). Residues 77–99 are disordered; it reads VQNSQVQNTASQQSNNNQNQESK.

Belongs to the Hfq family. As to quaternary structure, homohexamer.

Functionally, RNA chaperone that binds small regulatory RNA (sRNAs) and mRNAs to facilitate mRNA translational regulation in response to envelope stress, environmental stress and changes in metabolite concentrations. Also binds with high specificity to tRNAs. The polypeptide is RNA-binding protein Hfq (Caldicellulosiruptor saccharolyticus (strain ATCC 43494 / DSM 8903 / Tp8T 6331)).